The primary structure comprises 408 residues: Biphenyl dioxygenase system ferredoxin--NAD(+) reductase component (408 aa).

4-35 (TIAIIGAGLAGSTAARALRAQGYEGRIHLLGD) provides a ligand contact to FAD. 145–173 (SLVIVGGGLIGCEVATTARKLSVHVTILE) lines the NAD(+) pocket.

The protein belongs to the bacterial ring-hydroxylating dioxygenase ferredoxin reductase family. As to quaternary structure, this dioxygenase system consists of four proteins: the two subunits of the hydroxylase component (BphA and BphE), a ferredoxin (BphF) and a ferredoxin reductase (BphG). FAD serves as cofactor.

The enzyme catalyses 2 reduced [2Fe-2S]-[ferredoxin] + NAD(+) + H(+) = 2 oxidized [2Fe-2S]-[ferredoxin] + NADH. It functions in the pathway xenobiotic degradation; biphenyl degradation. In terms of biological role, part of the electron transfer component of biphenyl dioxygenase, transfers electrons from ferredoxin (BphF) to NADH. The protein is Biphenyl dioxygenase system ferredoxin--NAD(+) reductase component (bphG) of Paraburkholderia xenovorans (strain LB400).